A 453-amino-acid polypeptide reads, in one-letter code: Ribosomal protein uS12 methylthiotransferase RimO (453 aa).

The region spanning 5–120 (PKVGFVSLGC…VMQAVHSHLP (116 aa)) is the MTTase N-terminal domain. Positions 14, 50, 79, 151, 155, and 158 each coordinate [4Fe-4S] cluster. Residues 137–382 (LTPRHYAYLK…MEVAEEVSAN (246 aa)) form the Radical SAM core domain. Residues 385–453 (QRKVGKTLKV…ADGHDLWGEV (69 aa)) form the TRAM domain.

The protein belongs to the methylthiotransferase family. RimO subfamily. [4Fe-4S] cluster is required as a cofactor.

It is found in the cytoplasm. The catalysed reaction is L-aspartate(89)-[ribosomal protein uS12]-hydrogen + (sulfur carrier)-SH + AH2 + 2 S-adenosyl-L-methionine = 3-methylsulfanyl-L-aspartate(89)-[ribosomal protein uS12]-hydrogen + (sulfur carrier)-H + 5'-deoxyadenosine + L-methionine + A + S-adenosyl-L-homocysteine + 2 H(+). Catalyzes the methylthiolation of an aspartic acid residue of ribosomal protein uS12. This Burkholderia lata (strain ATCC 17760 / DSM 23089 / LMG 22485 / NCIMB 9086 / R18194 / 383) protein is Ribosomal protein uS12 methylthiotransferase RimO.